A 418-amino-acid chain; its full sequence is Perilipin-1 homolog (418 aa).

The tract at residues 211 to 275 (LTIGQRVKNL…EKKTWVIEKS (65 aa)) is required for lipid droplet localization.

This sequence belongs to the perilipin family. In terms of tissue distribution, expressed in intestinal and epidermal cells. Expressed in the muscle and hypodermis.

The protein resides in the lipid droplet. In terms of biological role, lipid droplet-associated protein which plays a role in lipid droplet clustering. In Caenorhabditis elegans, this protein is Perilipin-1 homolog.